A 140-amino-acid chain; its full sequence is Calcium-binding protein B (140 aa).

2 consecutive EF-hand domains span residues 38 to 73 and 74 to 109; these read ATLS…INQP and KTYL…KTSS. The Ca(2+) site is built by Asp-51, Asn-53, Ser-55, Asp-57, and Glu-62.

The polypeptide is Calcium-binding protein B (cbpB) (Dictyostelium discoideum (Social amoeba)).